Consider the following 62-residue polypeptide: Ferredoxin-3 (62 aa).

4Fe-4S ferredoxin-type domains are found at residues 2–28 (SLKI…SAGS) and 29–62 (DIYV…IVKA). The [4Fe-4S] cluster site is built by cysteine 9, cysteine 12, cysteine 15, cysteine 19, cysteine 38, cysteine 41, cysteine 50, and cysteine 54.

[4Fe-4S] cluster is required as a cofactor.

Functionally, ferredoxins are iron-sulfur proteins that transfer electrons in a wide variety of metabolic reactions. The polypeptide is Ferredoxin-3 (Chlorobaculum tepidum (strain ATCC 49652 / DSM 12025 / NBRC 103806 / TLS) (Chlorobium tepidum)).